The primary structure comprises 103 residues: Small ribosomal subunit protein uS10 (103 aa).

Belongs to the universal ribosomal protein uS10 family. In terms of assembly, part of the 30S ribosomal subunit.

In terms of biological role, involved in the binding of tRNA to the ribosomes. The polypeptide is Small ribosomal subunit protein uS10 (Nitratiruptor sp. (strain SB155-2)).